A 684-amino-acid chain; its full sequence is Histamine oxidase (684 aa).

Residue tyrosine 316–aspartate 327 participates in substrate binding. Residue aspartate 318 is the Proton acceptor of the active site. A disulfide bridge connects residues cysteine 337 and cysteine 363. Valine 399–tyrosine 404 contributes to the substrate binding site. Tyrosine 402 serves as the catalytic Schiff-base intermediate with substrate; via topaquinone. The residue at position 402 (tyrosine 402) is a 2',4',5'-topaquinone. 2 residues coordinate Cu cation: histidine 451 and histidine 453. Ca(2+)-binding residues include aspartate 460, glutamate 500, tyrosine 590, and aspartate 601. Aspartate 460 serves as a coordination point for Mn(2+). Aspartate 601 is a Mn(2+) binding site. Cu cation is bound at residue histidine 612. Positions serine 647–histidine 684 are disordered. Residues aspartate 675–histidine 684 are compositionally biased toward gly residues.

It belongs to the copper/topaquinone oxidase family. Homodimer. Requires Cu cation as cofactor. Zn(2+) is required as a cofactor. Ca(2+) serves as cofactor. It depends on L-topaquinone as a cofactor. The cofactor is Mn(2+). Post-translationally, topaquinone (TPQ) is generated by copper-dependent autoxidation of a specific tyrosyl residue.

Its subcellular location is the cytoplasm. It catalyses the reaction a primary methyl amine + O2 + H2O = an aldehyde + H2O2 + NH4(+). The enzyme catalyses histamine + O2 + H2O = imidazole-4-acetaldehyde + H2O2 + NH4(+). Functionally, oxidizes histamine. Other amines including phenethylamine, tyramine, tryptamine, putrescine, and benzylamine also serve as substrate. This Arthrobacter globiformis protein is Histamine oxidase.